Here is a 1640-residue protein sequence, read N- to C-terminus: Phospholipase D C (1640 aa).

The span at 122 to 132 (SHRSNQSFNHS) shows a compositional bias: polar residues. Disordered regions lie at residues 122-247 (SHRS…KRLS), 264-283 (HNQN…HTTT), 439-499 (EKQQ…YKYN), and 521-541 (DDEY…PSQE). The segment covering 133–193 (NSTTPLNTTN…YSSDNSYLHN (61 aa)) has biased composition (low complexity). The span at 197–231 (DIYEDEDDEDDEDDDDDEDEDDEGKEFEQDDEDES) shows a compositional bias: acidic residues. The span at 232–247 (TISSMSLKNSQAKRLS) shows a compositional bias: polar residues. Low complexity-rich tracts occupy residues 264–273 (HNQNHQNHQN) and 467–499 (TTTT…YKYN). Over residues 521–534 (DDEYYYGEYDDEDD) the composition is skewed to acidic residues. In terms of domain architecture, PLD phosphodiesterase 1 spans 1009–1036 (LYWSHHQKVVVVDQRIAFIGGLDLCFGR). Residues His1014, Lys1016, and Asp1021 contribute to the active site. 2 stretches are compositionally biased toward low complexity: residues 1149-1274 (INNN…NNLN) and 1282-1296 (HNNS…QQQQ). The disordered stretch occupies residues 1149–1315 (INNNNNNANN…YQPPLPPQQR (167 aa)). A compositionally biased stretch (basic residues) spans 1297 to 1306 (QHHHHHHHHY). Positions 1460 to 1487 (EQIYVHSKVLIVDDKIAIIGSANINDRS) constitute a PLD phosphodiesterase 2 domain. Active-site residues include His1465, Lys1467, and Asp1472.

This sequence belongs to the phospholipase D family.

The enzyme catalyses a 1,2-diacyl-sn-glycero-3-phosphocholine + H2O = a 1,2-diacyl-sn-glycero-3-phosphate + choline + H(+). Inhibited by butan-1-ol. Plays a role in cell growth. Hydrolyzes membrane phospholipids, such as PtdCho (phosphatidylcholine), producing the free headgroup and PtdOH (phosphatidic acid; signaling molecule on its own). Involved in the inhibition of actin-based motility and endocytosis. Its inhibition causes complete collapse of F-actin organization. In Dictyostelium discoideum (Social amoeba), this protein is Phospholipase D C (pldC).